The primary structure comprises 300 residues: N-acetylmannosamine kinase (300 aa).

Residues 5–12 (ALDIGGTK) and 132–139 (GVGGGIVL) each bind ATP. 4 residues coordinate Zn(2+): His156, Cys166, Cys168, and Cys173.

It belongs to the ROK (NagC/XylR) family. NanK subfamily. In terms of assembly, homodimer.

It carries out the reaction an N-acyl-D-mannosamine + ATP = an N-acyl-D-mannosamine 6-phosphate + ADP + H(+). It participates in amino-sugar metabolism; N-acetylneuraminate degradation; D-fructose 6-phosphate from N-acetylneuraminate: step 2/5. Its function is as follows. Catalyzes the phosphorylation of N-acetylmannosamine (ManNAc) to ManNAc-6-P. The chain is N-acetylmannosamine kinase from Haemophilus influenzae (strain 86-028NP).